Consider the following 504-residue polypeptide: ATP synthase subunit alpha (504 aa).

Residue 169–176 (GDRQTGKT) coordinates ATP.

This sequence belongs to the ATPase alpha/beta chains family. In terms of assembly, F-type ATPases have 2 components, CF(1) - the catalytic core - and CF(0) - the membrane proton channel. CF(1) has five subunits: alpha(3), beta(3), gamma(1), delta(1), epsilon(1). CF(0) has three main subunits: a(1), b(2) and c(9-12). The alpha and beta chains form an alternating ring which encloses part of the gamma chain. CF(1) is attached to CF(0) by a central stalk formed by the gamma and epsilon chains, while a peripheral stalk is formed by the delta and b chains.

It is found in the cell membrane. The catalysed reaction is ATP + H2O + 4 H(+)(in) = ADP + phosphate + 5 H(+)(out). Its function is as follows. Produces ATP from ADP in the presence of a proton gradient across the membrane. The alpha chain is a regulatory subunit. The sequence is that of ATP synthase subunit alpha from Clostridium kluyveri (strain NBRC 12016).